A 377-amino-acid chain; its full sequence is P2Y purinoceptor 2 (377 aa).

Over 1–32 (MAADLGPWNDTINGTWDGDELGYRCRFNEDFK) the chain is Extracellular. N-linked (GlcNAc...) asparagine glycans are attached at residues asparagine 9 and asparagine 13. Residues 33–59 (YVLLPVSYGVVCVPGLCLNAVALYIFL) traverse the membrane as a helical segment. The Cytoplasmic segment spans residues 60–70 (CRLKTWNASTT). Residues 71–93 (YMFHLAVSDALYAASLPLLVYYY) traverse the membrane as a helical segment. Topologically, residues 94-110 (ARGDHWPFSTVLCKLVR) are extracellular. Cysteine 106 and cysteine 183 are joined by a disulfide. A helical transmembrane segment spans residues 111–129 (FLFYTNLYCSILFLTCISV). Residues 130–152 (HRCLGVLRPLRSLRWGRARYARR) are Cytoplasmic-facing. A helical transmembrane segment spans residues 153–172 (VAGAVWVLVLACQAPVLYFV). At 173–194 (TTSARGGRVTCHDTSAPELFSR) the chain is on the extracellular side. Residues 195-220 (FVAYSSVMLGLLFAVPFAVILVCYVL) form a helical membrane-spanning segment. The Cytoplasmic segment spans residues 221–246 (MARRLLKPAYGTSGGLPRAKRKSVRT). Residues 247 to 269 (IAVVLAVFALCFLPFHVTRTLYY) form a helical membrane-spanning segment. Over 270–287 (SFRSLDLSCHTLNAINMA) the chain is Extracellular. A helical transmembrane segment spans residues 288-309 (YKVTRPLASANSCLDPVLYFLA). At 310 to 377 (GQRLVRFARD…GSENTKDIRL (68 aa)) the chain is on the cytoplasmic side. The disordered stretch occupies residues 318–377 (RDAKPPTGPSPATPARRRLGLRRSDRTDMQRIEDVLGSSEDSRRTESTPAGSENTKDIRL). A compositionally biased stretch (basic and acidic residues) spans 339–363 (RRSDRTDMQRIEDVLGSSEDSRRTE).

This sequence belongs to the G-protein coupled receptor 1 family. In terms of tissue distribution, spleen, testis, kidney, liver, lung, heart and brain.

The protein resides in the cell membrane. Functionally, receptor for ATP and UTP coupled to G-proteins that activate a phosphatidylinositol-calcium second messenger system. The affinity range is UTP = ATP &gt; ATP-gamma-S &gt;&gt; 2-methylthio-ATP = ADP. The polypeptide is P2Y purinoceptor 2 (P2RY2) (Homo sapiens (Human)).